The sequence spans 510 residues: NAD(P)H-quinone oxidoreductase subunit 2 A, chloroplastic (510 aa).

12 helical membrane passes run Leu-24 to Leu-44, Trp-59 to Trp-79, Ile-99 to Ile-119, Met-124 to Cys-144, Leu-149 to Tyr-169, Tyr-183 to Gly-203, Ile-229 to Phe-249, Trp-295 to Ile-315, Met-323 to Asp-343, Tyr-354 to Leu-374, Ala-395 to Phe-415, and Leu-418 to Leu-438.

This sequence belongs to the complex I subunit 2 family. NDH is composed of at least 16 different subunits, 5 of which are encoded in the nucleus.

It is found in the plastid. Its subcellular location is the chloroplast thylakoid membrane. It catalyses the reaction a plastoquinone + NADH + (n+1) H(+)(in) = a plastoquinol + NAD(+) + n H(+)(out). The catalysed reaction is a plastoquinone + NADPH + (n+1) H(+)(in) = a plastoquinol + NADP(+) + n H(+)(out). Its function is as follows. NDH shuttles electrons from NAD(P)H:plastoquinone, via FMN and iron-sulfur (Fe-S) centers, to quinones in the photosynthetic chain and possibly in a chloroplast respiratory chain. The immediate electron acceptor for the enzyme in this species is believed to be plastoquinone. Couples the redox reaction to proton translocation, and thus conserves the redox energy in a proton gradient. In Dioscorea elephantipes (Elephant's foot yam), this protein is NAD(P)H-quinone oxidoreductase subunit 2 A, chloroplastic.